The following is a 95-amino-acid chain: Protein TusB (95 aa).

It belongs to the DsrH/TusB family. As to quaternary structure, heterohexamer, formed by a dimer of trimers. The hexameric TusBCD complex contains 2 copies each of TusB, TusC and TusD. The TusBCD complex interacts with TusE.

The protein localises to the cytoplasm. Functionally, part of a sulfur-relay system required for 2-thiolation of 5-methylaminomethyl-2-thiouridine (mnm(5)s(2)U) at tRNA wobble positions. The protein is Protein TusB of Buchnera aphidicola subsp. Baizongia pistaciae (strain Bp).